The sequence spans 161 residues: Ribonuclease H (161 aa).

An RNase H type-1 domain is found at 5-149 (EKLAIAAATD…VDAIAVAFSK (145 aa)). Positions 14, 53, 78, and 141 each coordinate Mg(2+).

This sequence belongs to the RNase H family. In terms of assembly, monomer. Mg(2+) is required as a cofactor.

It localises to the cytoplasm. The enzyme catalyses Endonucleolytic cleavage to 5'-phosphomonoester.. Endonuclease that specifically degrades the RNA of RNA-DNA hybrids. The polypeptide is Ribonuclease H (Prochlorococcus marinus (strain NATL2A)).